Here is a 196-residue protein sequence, read N- to C-terminus: RNA-binding protein with multiple splicing 2 (196 aa).

The 78-residue stretch at 20–97 (RTLFVSGLPI…QTLRLEFAKA (78 aa)) folds into the RRM domain. The interval 30-40 (DIKPRELYLLF) is important for homodimerization.

Homodimer. As to expression, expressed in developing heart, pronephros, retina and epiphysis. In adult, high expression in heart, moderate in kidney, undetectable in liver, lung and skeletal muscle.

Its subcellular location is the cytoplasm. The protein localises to the nucleus. It is found in the stress granule. Functionally, RNA-binding protein involved in the regulation of smooth muscle cell differentiation and proliferation in the gastrointestinal system. Binds NOG mRNA, the major inhibitor of the bone morphogenetic protein (BMP) pathway. Mediates an increase of NOG mRNA levels, thereby contributing to the negative regulation of BMP signaling pathway and promoting reversible dedifferentiation and proliferation of smooth muscle cells. Acts as a pre-mRNA alternative splicing regulator. Mediates ACTN1 and FLNB alternative splicing. Likely binds to mRNA tandem CAC trinucleotide or CA dinucleotide motifs. The protein is RNA-binding protein with multiple splicing 2 of Xenopus laevis (African clawed frog).